The primary structure comprises 384 residues: MTKPIITFNNVSKTFEDSGTQVLKNINFDLEEGKFYTLLGASGSGKSTILNIMAGLLDASSGDIYLDGERINDLPINKRDIHTVFQNYALFPHMTVFENVAFALKLKKVDKKEIAKRVKETLKMVQLEGYENRSIQKLSGGQRQRVAIARAIINQPRVVLLDEPLSALDLKLRTEMQYELRELQQRLGITFVFVTHDQEEALAMSDWVFVMNEGEIVQSGTPVDIYDEPINHFVANFIGESNIINGTMIEDYLVSFNGKEFESVDGGMRPNEPVEVVIRPEDLQITLPEEGKLQVKVDTQLFRGVHYEIIAYDELGNEWMIHSTRKAIEGEVIGLDFTPEDLHIMRLNETEEEFDARIEEYVEMDESEDGLINAIEEERNEENL.

Residues 6-238 (ITFNNVSKTF…PINHFVANFI (233 aa)) form the ABC transporter domain. 40 to 47 (GASGSGKS) contributes to the ATP binding site.

This sequence belongs to the ABC transporter superfamily. Spermidine/putrescine importer (TC 3.A.1.11.1) family. The complex is composed of two ATP-binding proteins (PotA), two transmembrane proteins (PotB and PotC) and a solute-binding protein (PotD).

The protein resides in the cell membrane. It catalyses the reaction ATP + H2O + polyamine-[polyamine-binding protein]Side 1 = ADP + phosphate + polyamineSide 2 + [polyamine-binding protein]Side 1.. Functionally, part of the ABC transporter complex PotABCD involved in spermidine/putrescine import. Responsible for energy coupling to the transport system. This Streptococcus pyogenes serotype M6 (strain ATCC BAA-946 / MGAS10394) protein is Spermidine/putrescine import ATP-binding protein PotA.